A 238-amino-acid chain; its full sequence is UPF0280 protein Mboo_1274 (238 aa).

Belongs to the UPF0280 family.

The chain is UPF0280 protein Mboo_1274 from Methanoregula boonei (strain DSM 21154 / JCM 14090 / 6A8).